The chain runs to 362 residues: Peptide chain release factor 1 (362 aa).

N5-methylglutamine is present on Gln237. The span at 284 to 295 (EEEKRQAEETST) shows a compositional bias: basic and acidic residues. A disordered region spans residues 284 to 304 (EEEKRQAEETSTRRNLVASGD).

The protein belongs to the prokaryotic/mitochondrial release factor family. Methylated by PrmC. Methylation increases the termination efficiency of RF1.

Its subcellular location is the cytoplasm. Functionally, peptide chain release factor 1 directs the termination of translation in response to the peptide chain termination codons UAG and UAA. This chain is Peptide chain release factor 1, found in Pseudoalteromonas atlantica (strain T6c / ATCC BAA-1087).